Reading from the N-terminus, the 306-residue chain is Acetyl-coenzyme A carboxylase carboxyl transferase subunit beta (306 aa).

The 270-residue stretch at 25–294 (LWIKCPETGE…TVVGANDDKT (270 aa)) folds into the CoA carboxyltransferase N-terminal domain.

The protein belongs to the AccD/PCCB family. Acetyl-CoA carboxylase is a heterohexamer composed of biotin carboxyl carrier protein (AccB), biotin carboxylase (AccC) and two subunits each of ACCase subunit alpha (AccA) and ACCase subunit beta (AccD).

It localises to the cytoplasm. It catalyses the reaction N(6)-carboxybiotinyl-L-lysyl-[protein] + acetyl-CoA = N(6)-biotinyl-L-lysyl-[protein] + malonyl-CoA. It functions in the pathway lipid metabolism; malonyl-CoA biosynthesis; malonyl-CoA from acetyl-CoA: step 1/1. Its function is as follows. Component of the acetyl coenzyme A carboxylase (ACC) complex. Biotin carboxylase (BC) catalyzes the carboxylation of biotin on its carrier protein (BCCP) and then the CO(2) group is transferred by the transcarboxylase to acetyl-CoA to form malonyl-CoA. The protein is Acetyl-coenzyme A carboxylase carboxyl transferase subunit beta of Allorhizobium ampelinum (strain ATCC BAA-846 / DSM 112012 / S4) (Agrobacterium vitis (strain S4)).